The primary structure comprises 570 residues: Glutamate--tRNA ligase (570 aa).

Positions P105–N115 match the 'HIGH' region motif.

The protein belongs to the class-I aminoacyl-tRNA synthetase family. Glutamate--tRNA ligase type 2 subfamily.

It localises to the cytoplasm. It catalyses the reaction tRNA(Glu) + L-glutamate + ATP = L-glutamyl-tRNA(Glu) + AMP + diphosphate. In terms of biological role, catalyzes the attachment of glutamate to tRNA(Glu) in a two-step reaction: glutamate is first activated by ATP to form Glu-AMP and then transferred to the acceptor end of tRNA(Glu). This is Glutamate--tRNA ligase from Pyrococcus horikoshii (strain ATCC 700860 / DSM 12428 / JCM 9974 / NBRC 100139 / OT-3).